Here is a 165-residue protein sequence, read N- to C-terminus: Transcription antitermination protein NusB (165 aa).

A disordered region spans residues 1–27 (MISDDTDQFNPRDAKSPEAAKGKSAKR). Positions 10–21 (NPRDAKSPEAAK) are enriched in basic and acidic residues.

Belongs to the NusB family.

In terms of biological role, involved in transcription antitermination. Required for transcription of ribosomal RNA (rRNA) genes. Binds specifically to the boxA antiterminator sequence of the ribosomal RNA (rrn) operons. This is Transcription antitermination protein NusB from Pseudomonas savastanoi pv. phaseolicola (strain 1448A / Race 6) (Pseudomonas syringae pv. phaseolicola (strain 1448A / Race 6)).